We begin with the raw amino-acid sequence, 307 residues long: Pantothenate kinase (307 aa).

87–94 (GSVAVGKS) is a binding site for ATP.

It belongs to the prokaryotic pantothenate kinase family.

It localises to the cytoplasm. The enzyme catalyses (R)-pantothenate + ATP = (R)-4'-phosphopantothenate + ADP + H(+). Its pathway is cofactor biosynthesis; coenzyme A biosynthesis; CoA from (R)-pantothenate: step 1/5. This is Pantothenate kinase from Vibrio vulnificus (strain CMCP6).